The chain runs to 537 residues: Phosphoenolpyruvate carboxykinase (ATP) (537 aa).

Residues Arg61, Tyr195, and Lys201 each contribute to the substrate site. ATP is bound by residues Lys201, His220, and 236–244 (GLSGTGKTT). The Mn(2+) site is built by Lys201 and His220. Asp257 contacts Mn(2+). Positions 285, 323, and 448 each coordinate ATP. Arg323 contacts substrate.

Belongs to the phosphoenolpyruvate carboxykinase (ATP) family. Mn(2+) is required as a cofactor.

The protein resides in the cytoplasm. It catalyses the reaction oxaloacetate + ATP = phosphoenolpyruvate + ADP + CO2. Its pathway is carbohydrate biosynthesis; gluconeogenesis. Functionally, involved in the gluconeogenesis. Catalyzes the conversion of oxaloacetate (OAA) to phosphoenolpyruvate (PEP) through direct phosphoryl transfer between the nucleoside triphosphate and OAA. The polypeptide is Phosphoenolpyruvate carboxykinase (ATP) (Rhodopseudomonas palustris (strain HaA2)).